The primary structure comprises 229 residues: 7-cyano-7-deazaguanine synthase (229 aa).

Residue 9–19 participates in ATP binding; that stretch reads LSGGLDSATVL. Residues C188, C198, C201, and C204 each coordinate Zn(2+).

Belongs to the QueC family. The cofactor is Zn(2+).

It catalyses the reaction 7-carboxy-7-deazaguanine + NH4(+) + ATP = 7-cyano-7-deazaguanine + ADP + phosphate + H2O + H(+). The protein operates within purine metabolism; 7-cyano-7-deazaguanine biosynthesis. Catalyzes the ATP-dependent conversion of 7-carboxy-7-deazaguanine (CDG) to 7-cyano-7-deazaguanine (preQ(0)). This is 7-cyano-7-deazaguanine synthase from Methylobacillus flagellatus (strain ATCC 51484 / DSM 6875 / VKM B-1610 / KT).